We begin with the raw amino-acid sequence, 146 residues long: Angiogenin (146 aa).

The signal sequence occupies residues 1-24; the sequence is MVMGLGLFLLVFMLGLGLTLPTLA. The residue at position 25 (Gln-25) is a Pyrrolidone carboxylic acid. His-37 functions as the Proton acceptor in the catalytic mechanism. Arg-45 lines the tRNA pocket. 3 disulfide bridges follow: Cys-50–Cys-105, Cys-63–Cys-116, and Cys-81–Cys-131. The short motif at 55 to 59 is the Nucleolar localization signal element; it reads RRRHL. TRNA contacts are provided by Cys-105 and Ile-127. The active-site Proton donor is His-138.

The protein belongs to the pancreatic ribonuclease family. Homodimer. Interacts with RNH1; inhibiting ANG ribonuclease activity. Interacts with PCNA.

It localises to the secreted. The protein localises to the nucleus. Its subcellular location is the nucleolus. The protein resides in the cytoplasm. It is found in the stress granule. Its activity is regulated as follows. Has weak tRNA ribonuclease activity by itself due to partial autoinhibition by its C-terminus, which folds into a short alpha-helix that partially occludes the substrate-binding site. In absence of stress, the ribonuclease activity is inhibited by RNH1 in the cytoplasm. In response to stress, dissociates from RNH1 in the cytoplasm and associates with cytoplasmic ribosomes with vacant A-sites: ribosomes directly activate the tRNA ribonuclease activity of ANG by refolding the C-terminal alpha-helix. In response to stress, the angiogenic activity of ANG is inhibited by RNH1 in the nucleus. In terms of biological role, secreted ribonuclease that can either promote or restrict cell proliferation of target cells, depending on the context. Endocytosed in target cells via its receptor PLXNB2 and translocates to the cytoplasm or nucleus. Under stress conditions, localizes to the cytoplasm and promotes the assembly of stress granules (SGs): specifically cleaves a subset of tRNAs within anticodon loops to produce tRNA-derived stress-induced fragments (tiRNAs), resulting in translation repression and inhibition of cell proliferation. tiRNas also prevent formation of apoptosome, thereby promoting cell survival. Preferentially cleaves RNAs between a pyrimidine and an adenosine residue, suggesting that it cleaves the anticodon loop of tRNA(Ala) (32-UUAGCAU-38) after positions 33 and 36. Cleaves a subset of tRNAs, including tRNA(Ala), tRNA(Glu), tRNA(Gly), tRNA(Lys), tRNA(Val), tRNA(His), tRNA(Asp) and tRNA(Sec). Under growth conditions and in differentiated cells, translocates to the nucleus and stimulates ribosomal RNA (rRNA) transcription, including that containing the initiation site sequences of 45S rRNA, thereby promoting cell growth and proliferation. Angiogenin induces vascularization of normal and malignant tissues via its ability to promote rRNA transcription. Involved in hematopoietic stem and progenitor cell (HSPC) growth and survival by promoting rRNA transcription in growth conditions and inhibiting translation in response to stress, respectively. Mediates the crosstalk between myeloid and intestinal epithelial cells to protect the intestinal epithelial barrier integrity: secreted by myeloid cells and promotes intestinal epithelial cells proliferation and survival. Also mediates osteoclast-endothelial cell crosstalk in growing bone: produced by osteoclasts and protects the neighboring vascular cells against senescence by promoting rRNA transcription. This is Angiogenin (ANG) from Papio hamadryas (Hamadryas baboon).